The sequence spans 144 residues: Transcriptional regulator SlyA (144 aa).

In terms of domain architecture, HTH marR-type spans 2 to 135; it reads ESPLGSDLAR…LLHLIRKLEQ (134 aa). The H-T-H motif DNA-binding region spans 49–72; that stretch reads QIQLAKAIGIEQPSLVRTLDQLEE.

It belongs to the SlyA family. Homodimer.

Functionally, transcription regulator that can specifically activate or repress expression of target genes. The polypeptide is Transcriptional regulator SlyA (Klebsiella pneumoniae (strain 342)).